The chain runs to 288 residues: Protoheme IX farnesyltransferase 2 (288 aa).

9 helical membrane passes run 8-28, 36-56, 85-105, 108-128, 131-151, 152-172, 211-231, 233-252, and 267-287; these read ITKP…FFLA, LMLF…GCVV, VAFV…FQLV, LSAV…TMWY, NSVY…LVGY, LAVT…FCLW, AYVV…EAGY, YLAV…FRSI, and VSLL…IPLA.

It belongs to the UbiA prenyltransferase family. Protoheme IX farnesyltransferase subfamily.

The protein localises to the cell inner membrane. The catalysed reaction is heme b + (2E,6E)-farnesyl diphosphate + H2O = Fe(II)-heme o + diphosphate. The protein operates within porphyrin-containing compound metabolism; heme O biosynthesis; heme O from protoheme: step 1/1. Functionally, converts heme B (protoheme IX) to heme O by substitution of the vinyl group on carbon 2 of heme B porphyrin ring with a hydroxyethyl farnesyl side group. In Vibrio parahaemolyticus serotype O3:K6 (strain RIMD 2210633), this protein is Protoheme IX farnesyltransferase 2.